The following is a 391-amino-acid chain: Phosphoglycerate kinase (391 aa).

Substrate is bound by residues 21 to 23 (DLN), R36, 59 to 62 (HLGR), R113, and R146. ATP-binding positions include K197, E319, and 345-348 (GGDT).

The protein belongs to the phosphoglycerate kinase family. As to quaternary structure, monomer.

The protein resides in the cytoplasm. The catalysed reaction is (2R)-3-phosphoglycerate + ATP = (2R)-3-phospho-glyceroyl phosphate + ADP. It functions in the pathway carbohydrate degradation; glycolysis; pyruvate from D-glyceraldehyde 3-phosphate: step 2/5. This is Phosphoglycerate kinase from Shewanella woodyi (strain ATCC 51908 / MS32).